The primary structure comprises 152 residues: Deoxyuridine 5'-triphosphate nucleotidohydrolase (152 aa).

Substrate-binding positions include 70 to 72 (RSG), Asn83, 87 to 89 (TID), and Lys97.

Belongs to the dUTPase family. The cofactor is Mg(2+).

It carries out the reaction dUTP + H2O = dUMP + diphosphate + H(+). The protein operates within pyrimidine metabolism; dUMP biosynthesis; dUMP from dCTP (dUTP route): step 2/2. This enzyme is involved in nucleotide metabolism: it produces dUMP, the immediate precursor of thymidine nucleotides and it decreases the intracellular concentration of dUTP so that uracil cannot be incorporated into DNA. In Corynebacterium diphtheriae (strain ATCC 700971 / NCTC 13129 / Biotype gravis), this protein is Deoxyuridine 5'-triphosphate nucleotidohydrolase.